A 343-amino-acid polypeptide reads, in one-letter code: Melanoma-associated antigen B18 (343 aa).

Residues 1-17 show a composition bias toward basic residues; the sequence is MPRGQKSKLRAREKRHQ. The interval 1–102 is disordered; the sequence is MPRGQKSKLR…LGSSREAEGW (102 aa). A compositionally biased stretch (polar residues) spans 67-87; sequence APSTTNAIAPVSCSSNEGASS. The segment covering 88–102 has biased composition (basic and acidic residues); it reads QDEKSLGSSREAEGW. Residues 100–343 are interaction with LNX1; the sequence is EGWKEDPLNK…TTSSSFSHAK (244 aa). Positions 107–306 constitute an MAGE domain; sequence LNKKVVSLVH…SAFPSCYEEA (200 aa). The disordered stretch occupies residues 313–343; sequence RTQARAAARAHTAAMANARSRTTSSSFSHAK. Residues 316–333 are compositionally biased toward low complexity; it reads ARAAARAHTAAMANARSR. Over residues 334–343 the composition is skewed to polar residues; the sequence is TTSSSFSHAK.

Interacts with LNX1.

Its subcellular location is the cytoplasm. Functionally, may enhance ubiquitin ligase activity of RING-type zinc finger-containing E3 ubiquitin-protein ligases. Proposed to act through recruitment and/or stabilization of the Ubl-conjugating enzyme (E2) at the E3:substrate complex. The polypeptide is Melanoma-associated antigen B18 (MAGEB18) (Homo sapiens (Human)).